The chain runs to 896 residues: Translation initiation factor IF-2 (896 aa).

Disordered regions lie at residues Leu32–Pro99 and Glu117–Glu304. Residues Ala35 to Ala48 show a composition bias toward polar residues. Basic and acidic residues predominate over residues Thr153 to Pro169. Low complexity predominate over residues Ala203–Pro214. The span at Arg215 to Gln227 shows a compositional bias: polar residues. The span at Pro228–Ser241 shows a compositional bias: low complexity. The segment covering Arg256–Gly280 has biased composition (basic and acidic residues). A tr-type G domain is found at Ile401–Lys570. Residues Gly410–Thr417 form a G1 region. GTP is bound at residue Gly410–Thr417. The tract at residues Ala435–His439 is G2. The interval Asp456 to Gly459 is G3. Residues Asp456–His460 and Asn510–Asp513 contribute to the GTP site. The segment at Asn510 to Asp513 is G4. The interval Ser546 to Lys548 is G5.

The protein belongs to the TRAFAC class translation factor GTPase superfamily. Classic translation factor GTPase family. IF-2 subfamily.

The protein resides in the cytoplasm. In terms of biological role, one of the essential components for the initiation of protein synthesis. Protects formylmethionyl-tRNA from spontaneous hydrolysis and promotes its binding to the 30S ribosomal subunits. Also involved in the hydrolysis of GTP during the formation of the 70S ribosomal complex. This is Translation initiation factor IF-2 from Chlamydia trachomatis serovar L2 (strain ATCC VR-902B / DSM 19102 / 434/Bu).